A 264-amino-acid chain; its full sequence is Small ribosomal subunit protein eS1 (264 aa).

Positions 236-255 are enriched in basic and acidic residues; it reads GEGGSGKRGEAGDKSERPEG. A disordered region spans residues 236-264; the sequence is GEGGSGKRGEAGDKSERPEGYEPPVQESV.

This sequence belongs to the eukaryotic ribosomal protein eS1 family. In terms of assembly, component of the small ribosomal subunit. Mature ribosomes consist of a small (40S) and a large (60S) subunit. The 40S subunit contains about 33 different proteins and 1 molecule of RNA (18S). The 60S subunit contains about 49 different proteins and 3 molecules of RNA (28S, 5.8S and 5S).

It localises to the cytoplasm. The polypeptide is Small ribosomal subunit protein eS1 (Spodoptera frugiperda (Fall armyworm)).